We begin with the raw amino-acid sequence, 843 residues long: Glycogen phosphorylase, brain form (843 aa).

At alanine 2 the chain carries N-acetylalanine. Residue serine 15 is modified to Phosphoserine; by PHK; in form phosphorylase A. Residues aspartate 43, tyrosine 197, and arginine 310 each coordinate AMP. Tyrosine 197 carries the phosphotyrosine modification. Tyrosine 473 is subject to Phosphotyrosine. A pyridoxal 5'-phosphate-binding site is contributed by lysine 569. The segment at 677-678 is pyridoxal 5'-phosphate; sequence TG. The residue at position 681 (lysine 681) is an N6-(pyridoxal phosphate)lysine.

The protein belongs to the glycogen phosphorylase family. In terms of assembly, homodimer. Dimers associate into a tetramer to form the enzymatically active phosphorylase A. Pyridoxal 5'-phosphate is required as a cofactor. Phosphorylated. Phosphorylation of Ser-15 converts phosphorylase B (unphosphorylated) to phosphorylase A.

It catalyses the reaction [(1-&gt;4)-alpha-D-glucosyl](n) + phosphate = [(1-&gt;4)-alpha-D-glucosyl](n-1) + alpha-D-glucose 1-phosphate. Activity of phosphorylase is controlled both by allosteric means (through the non-covalent binding of metabolites) and by covalent modification. Thus AMP allosterically activates, whereas ATP, ADP, and glucose-6-phosphate allosterically inhibit, phosphorylase B. Activated upon phosphorylation. Functionally, glycogen phosphorylase that regulates glycogen mobilization. Phosphorylase is an important allosteric enzyme in carbohydrate metabolism. Enzymes from different sources differ in their regulatory mechanisms and in their natural substrates. However, all known phosphorylases share catalytic and structural properties. In Homo sapiens (Human), this protein is Glycogen phosphorylase, brain form.